Here is a 336-residue protein sequence, read N- to C-terminus: 2-phospho-L-lactate transferase (336 aa).

D49 serves as a coordination point for 7,8-didemethyl-8-hydroxy-5-deazariboflavin.

This sequence belongs to the CofD family. Homodimer. Requires Mg(2+) as cofactor.

The enzyme catalyses (2S)-lactyl-2-diphospho-5'-guanosine + 7,8-didemethyl-8-hydroxy-5-deazariboflavin = oxidized coenzyme F420-0 + GMP + H(+). It functions in the pathway cofactor biosynthesis; coenzyme F420 biosynthesis. Its function is as follows. Catalyzes the transfer of the 2-phospholactate moiety from (2S)-lactyl-2-diphospho-5'-guanosine to 7,8-didemethyl-8-hydroxy-5-deazariboflavin (FO) with the formation of oxidized coenzyme F420-0 and GMP. This is 2-phospho-L-lactate transferase from Halobacterium salinarum (strain ATCC 700922 / JCM 11081 / NRC-1) (Halobacterium halobium).